Consider the following 227-residue polypeptide: Octanoyltransferase (227 aa).

One can recognise a BPL/LPL catalytic domain in the interval E35 to K222. Substrate-binding positions include R80–H87, A152–G154, and G165–A167. Residue C183 is the Acyl-thioester intermediate of the active site.

Belongs to the LipB family.

Its subcellular location is the cytoplasm. It catalyses the reaction octanoyl-[ACP] + L-lysyl-[protein] = N(6)-octanoyl-L-lysyl-[protein] + holo-[ACP] + H(+). The protein operates within protein modification; protein lipoylation via endogenous pathway; protein N(6)-(lipoyl)lysine from octanoyl-[acyl-carrier-protein]: step 1/2. In terms of biological role, catalyzes the transfer of endogenously produced octanoic acid from octanoyl-acyl-carrier-protein onto the lipoyl domains of lipoate-dependent enzymes. Lipoyl-ACP can also act as a substrate although octanoyl-ACP is likely to be the physiological substrate. This chain is Octanoyltransferase, found in Bacteroides thetaiotaomicron (strain ATCC 29148 / DSM 2079 / JCM 5827 / CCUG 10774 / NCTC 10582 / VPI-5482 / E50).